Here is a 393-residue protein sequence, read N- to C-terminus: Riboflavin biosynthesis protein RibBA (393 aa).

The DHBP synthase stretch occupies residues 1–200 (MQFDNIDSAL…IDDLIEYRKK (200 aa)). D-ribulose 5-phosphate contacts are provided by residues 27 to 28 (RE), Asp32, 139 to 143 (RNGHT), and Glu163. Glu28 provides a ligand contact to Mg(2+). Residue His142 coordinates Mg(2+). Positions 201–393 (LEPEIEFKAK…TKKIKMGHLI (193 aa)) are GTP cyclohydrolase II. 249 to 253 (RLHSA) is a GTP binding site. Positions 254, 265, and 267 each coordinate Zn(2+). Residues Gln270, 291 to 293 (EGR), and Thr313 contribute to the GTP site. The active-site Proton acceptor; for GTP cyclohydrolase activity is Asp325. Arg327 serves as the catalytic Nucleophile; for GTP cyclohydrolase activity. The GTP site is built by Ser348 and Lys353.

The protein in the N-terminal section; belongs to the DHBP synthase family. In the C-terminal section; belongs to the GTP cyclohydrolase II family. It depends on Mg(2+) as a cofactor. Mn(2+) is required as a cofactor. The cofactor is Zn(2+).

The catalysed reaction is D-ribulose 5-phosphate = (2S)-2-hydroxy-3-oxobutyl phosphate + formate + H(+). The enzyme catalyses GTP + 4 H2O = 2,5-diamino-6-hydroxy-4-(5-phosphoribosylamino)-pyrimidine + formate + 2 phosphate + 3 H(+). The protein operates within cofactor biosynthesis; riboflavin biosynthesis; 2-hydroxy-3-oxobutyl phosphate from D-ribulose 5-phosphate: step 1/1. Its pathway is cofactor biosynthesis; riboflavin biosynthesis; 5-amino-6-(D-ribitylamino)uracil from GTP: step 1/4. Catalyzes the conversion of D-ribulose 5-phosphate to formate and 3,4-dihydroxy-2-butanone 4-phosphate. Functionally, catalyzes the conversion of GTP to 2,5-diamino-6-ribosylamino-4(3H)-pyrimidinone 5'-phosphate (DARP), formate and pyrophosphate. The sequence is that of Riboflavin biosynthesis protein RibBA from Staphylococcus aureus (strain MSSA476).